We begin with the raw amino-acid sequence, 276 residues long: Ribosomal RNA small subunit methyltransferase I (276 aa).

It belongs to the methyltransferase superfamily. RsmI family.

It localises to the cytoplasm. It catalyses the reaction cytidine(1402) in 16S rRNA + S-adenosyl-L-methionine = 2'-O-methylcytidine(1402) in 16S rRNA + S-adenosyl-L-homocysteine + H(+). Functionally, catalyzes the 2'-O-methylation of the ribose of cytidine 1402 (C1402) in 16S rRNA. The polypeptide is Ribosomal RNA small subunit methyltransferase I (Mycoplasma pneumoniae (strain ATCC 29342 / M129 / Subtype 1) (Mycoplasmoides pneumoniae)).